The following is a 765-amino-acid chain: uncharacterized protein (765 aa).

The first 22 residues, 1 to 22 (MKLKGFLAVGVSVFGFSGLLMA), serve as a signal peptide directing secretion. C23 is lipidated: N-palmitoyl cysteine. A lipid anchor (S-diacylglycerol cysteine) is attached at C23. Disordered regions lie at residues 177–203 (EGTP…LEIA) and 218–255 (TAQN…TTKS). The segment covering 179-192 (TPTSTTVQATVSSR) has biased composition (polar residues). Residues 236-247 (SSSSSSTTSTTG) are compositionally biased toward low complexity.

This sequence belongs to the MG185/MG260 family.

Its subcellular location is the cell membrane. This is an uncharacterized protein from Mycoplasma genitalium (strain ATCC 33530 / DSM 19775 / NCTC 10195 / G37) (Mycoplasmoides genitalium).